The primary structure comprises 606 residues: Zinc metalloproteinase-disintegrin-like HF3 (606 aa).

An N-terminal signal peptide occupies residues 1 to 20 (MIQVLLVTICLAAFPYQGSS). The propeptide occupies 21 to 190 (IILESGNVND…KKASQLVVTA (170 aa)). The Peptidase M12B domain maps to 199–395 (KYIELVILAD…YKPQCILNEP (197 aa)). E202 is a Ca(2+) binding site. N259 carries N-linked (GlcNAc...) asparagine glycosylation. D286 is a Ca(2+) binding site. Cystine bridges form between C310-C390, C350-C374, and C352-C357. N313 is a glycosylation site (N-linked (GlcNAc...) asparagine). H335 provides a ligand contact to Zn(2+). Residue E336 is part of the active site. The Zn(2+) site is built by H339 and H345. N373 carries an N-linked (GlcNAc...) asparagine glycan. Residues C390, N393, V405, N408, L410, E412, E415, and D418 each coordinate Ca(2+). Positions 403 to 489 (PPVCGNELLE…DCPTDDFKRN (87 aa)) constitute a Disintegrin domain. 14 disulfides stabilise this stretch: C406–C435, C417–C430, C419–C425, C429–C452, C443–C449, C448–C474, C461–C481, C468–C500, C493–C505, C512–C562, C527–C569, C540–C550, C557–C594, and C588–C599. The D/ECD-tripeptide signature appears at 467–469 (ECD). 3 residues coordinate Ca(2+): D469, E472, and D484. N519 is a glycosylation site (N-linked (GlcNAc...) asparagine). N584 carries an N-linked (GlcNAc...) asparagine glycan.

It belongs to the venom metalloproteinase (M12B) family. P-III subfamily. P-IIIa sub-subfamily. Monomer. Zn(2+) serves as cofactor. As to expression, expressed by the venom gland.

The protein localises to the secreted. Functionally, the metalloproteinase-disintegrin-like HF3 is a potent hemorrhagic toxin that activates macrophages for phagocytosis through integrin alpha-M/beta-2 (ITGAM/ITGB2). It inhibits collagen-induced platelet aggregation. This protein shows cleavage specificity for substrate for leucine at P1' position, followed by hydrophobic residues in P2'. This Bothrops jararaca (Jararaca) protein is Zinc metalloproteinase-disintegrin-like HF3.